Reading from the N-terminus, the 901-residue chain is HTH-type transcriptional regulator MalT (901 aa).

39–46 (SPAGYGKT) is an ATP binding site. Residues 829 to 894 (ELIRTSPLTQ…DAVQHAQQLL (66 aa)) enclose the HTH luxR-type domain. Positions 853 to 872 (NEQIAGELAVAATTIKTHIR) form a DNA-binding region, H-T-H motif.

It belongs to the MalT family. In terms of assembly, monomer in solution. Oligomerizes to an active state in the presence of the positive effectors ATP and maltotriose.

With respect to regulation, activated by ATP and maltotriose, which are both required for DNA binding. Positively regulates the transcription of the maltose regulon whose gene products are responsible for uptake and catabolism of malto-oligosaccharides. Specifically binds to the promoter region of its target genes, recognizing a short DNA motif called the MalT box. This is HTH-type transcriptional regulator MalT from Salmonella gallinarum (strain 287/91 / NCTC 13346).